We begin with the raw amino-acid sequence, 127 residues long: Glycine cleavage system H protein (127 aa).

Positions 22 to 104 (QVVIGITHFA…YEGAWMVKVE (83 aa)) constitute a Lipoyl-binding domain. Position 63 is an N6-lipoyllysine (lysine 63).

Belongs to the GcvH family. As to quaternary structure, the glycine cleavage system is composed of four proteins: P, T, L and H. Requires (R)-lipoate as cofactor.

Functionally, the glycine cleavage system catalyzes the degradation of glycine. The H protein shuttles the methylamine group of glycine from the P protein to the T protein. Its function is as follows. Is also involved in protein lipoylation via its role as an octanoyl/lipoyl carrier protein intermediate. The sequence is that of Glycine cleavage system H protein from Bacillus cytotoxicus (strain DSM 22905 / CIP 110041 / 391-98 / NVH 391-98).